Here is a 164-residue protein sequence, read N- to C-terminus: MIMSVMASDSARAVVCTSRPFPKQKLRELVLQALYALEMAPKGEDSLVSLLMTEASVSKKNVLYALMFCKAIRANQSELDALLNATIRTTTLANLTIIERNILRMMLFEHQQNQESSPIPTAVLIAETTRLIKKFSYVEGSSLILAVLGSIFDQVAQEPASMCG.

This sequence belongs to the NusB family.

In terms of biological role, involved in transcription antitermination. Required for transcription of ribosomal RNA (rRNA) genes. Binds specifically to the boxA antiterminator sequence of the ribosomal RNA (rrn) operons. The sequence is that of Transcription antitermination protein NusB from Chlamydia muridarum (strain MoPn / Nigg).